The primary structure comprises 224 residues: Myogenin (224 aa).

Ser77 and Ser79 each carry phosphoserine; by CaMK2G. Residues 81 to 132 form the bHLH domain; the sequence is DRRRAATLREKRRLKKVNEAFEALKRSTLLNPNQRLPKVEILRSAIQYIERL. Phosphothreonine; by CaMK2G is present on Thr87.

Homodimer and heterodimer with E12; heterodimerization enhances MYOG DNA-binding and transcriptional activities. Interacts with SMARCA4/BRG1/BAF190A. Interacts (via C-terminal region) with SSRP1 and SUPT16H; the interaction is indicative of an interaction with the FACT complex. Interacts with CSRP3. Post-translationally, phosphorylated by CAMK2G on threonine and serine amino acids in a muscle activity-dependent manner. Phosphorylation of Thr-87 impairs both DNA-binding and trans-activation functions in contracting muscles.

The protein localises to the nucleus. Functionally, acts as a transcriptional activator that promotes transcription of muscle-specific target genes and plays a role in muscle differentiation, cell cycle exit and muscle atrophy. Essential for the development of functional embryonic skeletal fiber muscle differentiation. However is dispensable for postnatal skeletal muscle growth; phosphorylation by CAMK2G inhibits its transcriptional activity in respons to muscle activity. Required for the recruitment of the FACT complex to muscle-specific promoter regions, thus promoting gene expression initiation. During terminal myoblast differentiation, plays a role as a strong activator of transcription at loci with an open chromatin structure previously initiated by MYOD1. Together with MYF5 and MYOD1, co-occupies muscle-specific gene promoter core regions during myogenesis. Also cooperates with myocyte-specific enhancer factor MEF2D and BRG1-dependent recruitment of SWI/SNF chromatin-remodeling enzymes to alter chromatin structure at myogenic late gene promoters. Facilitates cell cycle exit during terminal muscle differentiation through the up-regulation of miR-20a expression, which in turn represses genes involved in cell cycle progression. Binds to the E-box containing (E1) promoter region of the miR-20a gene. Also plays a role in preventing reversal of muscle cell differentiation. Contributes to the atrophy-related gene expression in adult denervated muscles. Induces fibroblasts to differentiate into myoblasts. The polypeptide is Myogenin (MYOG) (Homo sapiens (Human)).